Here is a 250-residue protein sequence, read N- to C-terminus: 3-deoxy-manno-octulosonate cytidylyltransferase (250 aa).

The protein belongs to the KdsB family.

It localises to the cytoplasm. It carries out the reaction 3-deoxy-alpha-D-manno-oct-2-ulosonate + CTP = CMP-3-deoxy-beta-D-manno-octulosonate + diphosphate. Its pathway is nucleotide-sugar biosynthesis; CMP-3-deoxy-D-manno-octulosonate biosynthesis; CMP-3-deoxy-D-manno-octulosonate from 3-deoxy-D-manno-octulosonate and CTP: step 1/1. The protein operates within bacterial outer membrane biogenesis; lipopolysaccharide biosynthesis. Its function is as follows. Activates KDO (a required 8-carbon sugar) for incorporation into bacterial lipopolysaccharide in Gram-negative bacteria. The polypeptide is 3-deoxy-manno-octulosonate cytidylyltransferase (Francisella tularensis subsp. novicida (strain U112)).